The chain runs to 106 residues: Small ribosomal subunit protein bS18 (106 aa).

Positions 1 to 39 are disordered; it reads MNGRNNDMGRNGGADYDDRDFGRTPDLNADAPGRRRTGR.

It belongs to the bacterial ribosomal protein bS18 family. Part of the 30S ribosomal subunit. Forms a tight heterodimer with protein bS6.

In terms of biological role, binds as a heterodimer with protein bS6 to the central domain of the 16S rRNA, where it helps stabilize the platform of the 30S subunit. The polypeptide is Small ribosomal subunit protein bS18 (Sorangium cellulosum (strain So ce56) (Polyangium cellulosum (strain So ce56))).